Consider the following 421-residue polypeptide: Caspase-12 (421 aa).

The CARD domain occupies 1 to 92 (MADKKPSKED…QLSLEYQHES (92 aa)). At Ser85 the chain carries Phosphoserine. Positions 88–131 (YQHESEDQESEESSASSSSSTESEEENEESKDEERAASAHSMAV) are disordered. Residues 109–118 (ESEEENEESK) are compositionally biased toward acidic residues. Active-site residues include His252 and Cys300.

It belongs to the peptidase C14A family. As to quaternary structure, heterotetramer that consists of two anti-parallel arranged heterodimers, each one formed by two subunits (Potential). May interact with TRAF2.

In terms of biological role, involved in the activation cascade of caspases responsible for apoptosis execution. This chain is Caspase-12, found in Macaca mulatta (Rhesus macaque).